The following is a 356-amino-acid chain: MSSEMAAKSVKAFGLALKDSSGLFSPFNFSRRATGEHDVQLKVLYCGVCNFDNLMRRNKYGRTKFPYVFGHEIVGVVTEVGSNVKKFKIGNKVGVSFIVDTCRECERCKIGQQIACKKAVSSDGFFETPGYGGCSNIFVADENYVILWPENLPMDSGAPLLCIGITCYNPLRRFGLDKPGVRVGIVGLGAVGHLAIKFAKAFGARVTLISSSPGKKDEAFQKFGVDSFLVSSNAEEMQAAAETLDGILDTVPVVHPLEPLFALLKPLGKLIIIGEPHKPFEVSAMSLMEGGKIISASTGGSIKDTQEIVDFAAEHNVVADVEVIPVDYVNTAMERLDKADVKYRFVIDIGNTFKSP.

Residues Cys-49, His-71, Cys-102, Cys-105, Cys-108, Cys-116, and Cys-162 each contribute to the Zn(2+) site. 187 to 192 provides a ligand contact to NAD(+); that stretch reads GLGAVG.

Belongs to the zinc-containing alcohol dehydrogenase family. It depends on Zn(2+) as a cofactor. As to expression, expressed in leaf epidermis.

The catalysed reaction is (3R)-3-hydroxy-16-methoxy-2,3-dihydrotabersonine + A = (3R)-1,2-didehydro-3-hydroxy-16-methoxy-2,3-dihydrotabersonine + AH2. It carries out the reaction (3R)-3-hydroxy-2,3-dihydrotabersonine + A = (3R)-1,2-didehydro-3-hydroxy-2,3-dihydrotabersonine + AH2. The protein operates within alkaloid biosynthesis; vindoline biosynthesis. Its function is as follows. Converts the unstable imine alcohols produced by CYP71D1V2/T3O into 3-hydroxy-16-methoxy-2,3-dihydrotabersonine or 3-hydroxy-2,3-dihydrotabersonine. The chain is 16-methoxy-2,3-dihydro-3-hydroxytabersonine synthase from Catharanthus roseus (Madagascar periwinkle).